A 367-amino-acid chain; its full sequence is Peroxidase 1 (367 aa).

The signal sequence occupies residues 1–33; that stretch reads MAKESKLTAGVAAALTVVAACALCLLLPATARA. Residue glutamine 34 is modified to Pyrrolidone carboxylic acid. Cystine bridges form between cysteine 44–cysteine 125, cysteine 77–cysteine 82, cysteine 131–cysteine 335, and cysteine 209–cysteine 244. Catalysis depends on histidine 75, which acts as the Proton acceptor. 5 residues coordinate Ca(2+): aspartate 76, valine 79, glycine 81, aspartate 83, and serine 85. An N-linked (GlcNAc...) asparagine glycan is attached at asparagine 164. Substrate is bound at residue proline 172. Residue histidine 202 coordinates heme b. Residue threonine 203 coordinates Ca(2+). N-linked (GlcNAc...) asparagine glycosylation is found at asparagine 218 and asparagine 247. Positions 259, 262, and 267 each coordinate Ca(2+). N-linked (GlcNAc...) asparagine glycosylation occurs at asparagine 303.

This sequence belongs to the peroxidase family. Classical plant (class III) peroxidase subfamily. It depends on heme b as a cofactor. Ca(2+) serves as cofactor. In terms of tissue distribution, expressed in the root tip meristems.

It localises to the secreted. The protein resides in the vacuole. It carries out the reaction 2 a phenolic donor + H2O2 = 2 a phenolic radical donor + 2 H2O. Its function is as follows. Removal of H(2)O(2), oxidation of toxic reductants, biosynthesis and degradation of lignin, suberization, auxin catabolism, response to environmental stresses such as wounding, pathogen attack and oxidative stress. These functions might be dependent on each isozyme/isoform in each plant tissue. The protein is Peroxidase 1 (PER1) of Zea mays (Maize).